We begin with the raw amino-acid sequence, 157 residues long: Endoribonuclease YbeY (157 aa).

Zn(2+)-binding residues include His-113, His-117, and His-123.

Belongs to the endoribonuclease YbeY family. Zn(2+) serves as cofactor.

The protein resides in the cytoplasm. Its function is as follows. Single strand-specific metallo-endoribonuclease involved in late-stage 70S ribosome quality control and in maturation of the 3' terminus of the 16S rRNA. The chain is Endoribonuclease YbeY from Ehrlichia ruminantium (strain Welgevonden).